The following is a 196-amino-acid chain: ATP-dependent Clp protease proteolytic subunit (196 aa).

Serine 99 functions as the Nucleophile in the catalytic mechanism. Histidine 124 is a catalytic residue.

It belongs to the peptidase S14 family. As to quaternary structure, fourteen ClpP subunits assemble into 2 heptameric rings which stack back to back to give a disk-like structure with a central cavity, resembling the structure of eukaryotic proteasomes.

Its subcellular location is the cytoplasm. The catalysed reaction is Hydrolysis of proteins to small peptides in the presence of ATP and magnesium. alpha-casein is the usual test substrate. In the absence of ATP, only oligopeptides shorter than five residues are hydrolyzed (such as succinyl-Leu-Tyr-|-NHMec, and Leu-Tyr-Leu-|-Tyr-Trp, in which cleavage of the -Tyr-|-Leu- and -Tyr-|-Trp bonds also occurs).. Functionally, cleaves peptides in various proteins in a process that requires ATP hydrolysis. Has a chymotrypsin-like activity. Plays a major role in the degradation of misfolded proteins. The polypeptide is ATP-dependent Clp protease proteolytic subunit (Helicobacter hepaticus (strain ATCC 51449 / 3B1)).